A 497-amino-acid chain; its full sequence is tRNA-2-methylthio-N(6)-dimethylallyladenosine synthase (497 aa).

The segment at 1 to 50 (MTGTSNIPTHGKEHKDAPALLPLPAPNPHHTHAAHPGDPSHDRPPSRGKL) is disordered. The 118-residue stretch at 48-165 (GKLFIKTHGC…LPDMIRARRE (118 aa)) folds into the MTTase N-terminal domain. Cys57, Cys94, Cys128, Cys202, Cys206, and Cys209 together coordinate [4Fe-4S] cluster. Residues 188–430 (RAEGPSAFVS…QKHINAYAAD (243 aa)) enclose the Radical SAM core domain. In terms of domain architecture, TRAM spans 433–496 (KRMIGTVQTV…TNSLRGRVHT (64 aa)).

Belongs to the methylthiotransferase family. MiaB subfamily. Monomer. [4Fe-4S] cluster serves as cofactor.

Its subcellular location is the cytoplasm. The catalysed reaction is N(6)-dimethylallyladenosine(37) in tRNA + (sulfur carrier)-SH + AH2 + 2 S-adenosyl-L-methionine = 2-methylsulfanyl-N(6)-dimethylallyladenosine(37) in tRNA + (sulfur carrier)-H + 5'-deoxyadenosine + L-methionine + A + S-adenosyl-L-homocysteine + 2 H(+). Functionally, catalyzes the methylthiolation of N6-(dimethylallyl)adenosine (i(6)A), leading to the formation of 2-methylthio-N6-(dimethylallyl)adenosine (ms(2)i(6)A) at position 37 in tRNAs that read codons beginning with uridine. The protein is tRNA-2-methylthio-N(6)-dimethylallyladenosine synthase of Xylella fastidiosa (strain M12).